A 215-amino-acid chain; its full sequence is Adenylate kinase (215 aa).

Residue 10 to 15 (GAGKGT) coordinates ATP. An NMP region spans residues 30–59 (STGDIFRDAVNQGSELGQEAQKYMSSGQLV). AMP is bound by residues Thr-31, Arg-36, 57-59 (QLV), 85-88 (GFPR), and Gln-92. The segment at 126–163 (GRISCRECKRVYNLNFNPPREQGKCDSCGGELVQRNDD) is LID. Arg-127 provides a ligand contact to ATP. Zn(2+) contacts are provided by Cys-130 and Cys-133. Residue 136-137 (VY) participates in ATP binding. Positions 150 and 153 each coordinate Zn(2+). The AMP site is built by Arg-160 and Arg-171. Position 199 (Arg-199) interacts with ATP.

This sequence belongs to the adenylate kinase family. In terms of assembly, monomer.

It localises to the cytoplasm. It carries out the reaction AMP + ATP = 2 ADP. It functions in the pathway purine metabolism; AMP biosynthesis via salvage pathway; AMP from ADP: step 1/1. Its function is as follows. Catalyzes the reversible transfer of the terminal phosphate group between ATP and AMP. Plays an important role in cellular energy homeostasis and in adenine nucleotide metabolism. The polypeptide is Adenylate kinase (Syntrophomonas wolfei subsp. wolfei (strain DSM 2245B / Goettingen)).